A 421-amino-acid chain; its full sequence is MLELKFVRNNPDIVGRALVNRNMGTELIDSLLEYDVAWRKCLTEGDSLKHKRNVVTREIAQLKKENKDTLSKINEMQDINNRIKEIDDKIRDYKSKINEIMLSIPNIPSETTPVGKDENDNPVVRVVGEKKKFTFTPKPHWEIGEALDILDFERGAKIAGQGFTVYKGLGAKLERALINFMLDVHTRQGYLEVFPPVLINEKAMTGTGQLPKFKEDMYLCCADGYYLAPTAEVPVTNLFMDEYMENLPVSLTAYTACFRREAGKHGQDTRGIIRQHQFNKVELVKFVKPETSYEELEKLTLDAEEILKLLKLPYRLVTLCTGDLGFSAAKTYDIEVWVPTQEKYREISSCSNFENFQARRANIRFRTPEGPQFVHTLNGSGLAVGRTVVAILENYQREDGSVEIPEVLRPYMGGVEEIREE.

230–232 (TAE) contacts L-serine. 259 to 261 (RRE) lines the ATP pocket. Residue glutamate 282 coordinates L-serine. 346-349 (EISS) provides a ligand contact to ATP. Serine 380 is a binding site for L-serine.

Belongs to the class-II aminoacyl-tRNA synthetase family. Type-1 seryl-tRNA synthetase subfamily. In terms of assembly, homodimer. The tRNA molecule binds across the dimer.

It localises to the cytoplasm. The enzyme catalyses tRNA(Ser) + L-serine + ATP = L-seryl-tRNA(Ser) + AMP + diphosphate + H(+). The catalysed reaction is tRNA(Sec) + L-serine + ATP = L-seryl-tRNA(Sec) + AMP + diphosphate + H(+). It participates in aminoacyl-tRNA biosynthesis; selenocysteinyl-tRNA(Sec) biosynthesis; L-seryl-tRNA(Sec) from L-serine and tRNA(Sec): step 1/1. Its function is as follows. Catalyzes the attachment of serine to tRNA(Ser). Is also able to aminoacylate tRNA(Sec) with serine, to form the misacylated tRNA L-seryl-tRNA(Sec), which will be further converted into selenocysteinyl-tRNA(Sec). The protein is Serine--tRNA ligase of Methanosarcina acetivorans (strain ATCC 35395 / DSM 2834 / JCM 12185 / C2A).